An 885-amino-acid polypeptide reads, in one-letter code: GPI ethanolamine phosphate transferase 2 (885 aa).

N-linked (GlcNAc...) asparagine glycosylation is found at Asn-82, Asn-155, and Asn-194. Residues 413-433 traverse the membrane as a helical segment; it reads DIYAGALILVITALAVIVVFN. Asn-443 is a glycosylation site (N-linked (GlcNAc...) asparagine). Transmembrane regions (helical) follow at residues 447–467, 473–493, and 495–514; these read VMFY…SSLI, IWYF…FDTF, and SLQN…FMRS. Residue Asn-516 is glycosylated (N-linked (GlcNAc...) asparagine). The next 8 membrane-spanning stretches (helical) occupy residues 539–559, 581–601, 648–668, 697–717, 726–746, 768–788, 820–840, and 865–885; these read LMWG…YIQG, GLIS…FKLL, IQLS…RVII, ENIP…KLIY, YILT…FCMG, VFLV…FWSL, ILLV…VNLV, and SWIL…VLLF.

It belongs to the PIGG/PIGN/PIGO family. PIGG subfamily.

The protein resides in the endoplasmic reticulum membrane. The protein operates within glycolipid biosynthesis; glycosylphosphatidylinositol-anchor biosynthesis. In terms of biological role, ethanolamine phosphate transferase involved in glycosylphosphatidylinositol-anchor biosynthesis. Transfers ethanolamine phosphate to the GPI second mannose. The sequence is that of GPI ethanolamine phosphate transferase 2 (GPI7) from Candida albicans (strain SC5314 / ATCC MYA-2876) (Yeast).